The chain runs to 136 residues: Large ribosomal subunit protein uL16c (136 aa).

A disordered region spans residues 1-20 (MLSPKRTRFRKQHRGRMKGK).

The protein belongs to the universal ribosomal protein uL16 family. As to quaternary structure, part of the 50S ribosomal subunit.

Its subcellular location is the plastid. The protein resides in the chloroplast. The sequence is that of Large ribosomal subunit protein uL16c from Triticum aestivum (Wheat).